The sequence spans 427 residues: Methylenetetrahydrofolate--tRNA-(uracil-5-)-methyltransferase TrmFO (427 aa).

Residue Gly-6 to Gly-11 participates in FAD binding.

Belongs to the MnmG family. TrmFO subfamily. Requires FAD as cofactor.

It localises to the cytoplasm. The catalysed reaction is uridine(54) in tRNA + (6R)-5,10-methylene-5,6,7,8-tetrahydrofolate + NADH + H(+) = 5-methyluridine(54) in tRNA + (6S)-5,6,7,8-tetrahydrofolate + NAD(+). It catalyses the reaction uridine(54) in tRNA + (6R)-5,10-methylene-5,6,7,8-tetrahydrofolate + NADPH + H(+) = 5-methyluridine(54) in tRNA + (6S)-5,6,7,8-tetrahydrofolate + NADP(+). In terms of biological role, catalyzes the folate-dependent formation of 5-methyl-uridine at position 54 (M-5-U54) in all tRNAs. This Acholeplasma laidlawii (strain PG-8A) protein is Methylenetetrahydrofolate--tRNA-(uracil-5-)-methyltransferase TrmFO.